The sequence spans 109 residues: Large ribosomal subunit protein uL24 (109 aa).

It belongs to the universal ribosomal protein uL24 family. As to quaternary structure, part of the 50S ribosomal subunit.

Functionally, one of two assembly initiator proteins, it binds directly to the 5'-end of the 23S rRNA, where it nucleates assembly of the 50S subunit. In terms of biological role, one of the proteins that surrounds the polypeptide exit tunnel on the outside of the subunit. This is Large ribosomal subunit protein uL24 from Syntrophobacter fumaroxidans (strain DSM 10017 / MPOB).